The sequence spans 96 residues: MEVTDVRLRRVNTEGRMRAIASITLDGEFVVHDIRVIDGNNGLFVAMPSKRTPDGEFRDIAHPINSNHRGKIQDAVLAEYHRLGEVEVEFEEAGAS.

The protein belongs to the SpoVG family.

Its function is as follows. Essential for sporulation. Interferes with or is a negative regulator of the pathway leading to asymmetric septation. This is Putative septation protein SpoVG from Priestia megaterium (Bacillus megaterium).